Consider the following 297-residue polypeptide: uncharacterized protein (297 aa).

Residues 1-12 (MASYSFQFSTDA) show a composition bias toward polar residues. The disordered stretch occupies residues 1–21 (MASYSFQFSTDATGKPGAAKP).

It to B.subtilis XkdY/XepA.

This is an uncharacterized protein from Bacillus subtilis (strain 168).